Consider the following 398-residue polypeptide: Acetate kinase (398 aa).

Residue N8 coordinates Mg(2+). K15 provides a ligand contact to ATP. R92 contacts substrate. D149 serves as the catalytic Proton donor/acceptor. ATP-binding positions include 209–213, 283–285, and 331–335; these read HLGNG, DFR, and GVGEN. E385 contributes to the Mg(2+) binding site.

The protein belongs to the acetokinase family. In terms of assembly, homodimer. Mg(2+) serves as cofactor. Mn(2+) is required as a cofactor.

The protein resides in the cytoplasm. It catalyses the reaction acetate + ATP = acetyl phosphate + ADP. It participates in metabolic intermediate biosynthesis; acetyl-CoA biosynthesis; acetyl-CoA from acetate: step 1/2. Its function is as follows. Catalyzes the formation of acetyl phosphate from acetate and ATP. Can also catalyze the reverse reaction. In Corynebacterium efficiens (strain DSM 44549 / YS-314 / AJ 12310 / JCM 11189 / NBRC 100395), this protein is Acetate kinase.